Here is a 532-residue protein sequence, read N- to C-terminus: MKESKLSELLNRRLALLGERANLSLLEQCLHGIERECLRVTGEGRLAQTPHPEALGSALTNEQITTDYSESLLEFITPALPDPADTLASLDKIHRFAYSKLGNEYLWSPSMPCPLPAEEDIPIAYYGTSNIGQLKYVYRKGLALRYGKTMQCIAGIHYNFSLPEKLWPLLKEAEGFVGTDRDFQSSSYIALIRNFRRYSWLLMYLFGASPALDAGFLRGRAHQLEQLDPDTLYLPYATSLRMSDLGYQSNAQAGLTPCYNDLASYTDSLRKAVATPYAPYVEVGTHQDGEWVQLNTNILQIENEYYSNIRPKRVTYTGERPIQALMARGIQYVEVRCLDINPFLPMGIDLTESRFLDAFLLYCALNESPLLTNNSCGNATSNFLSVVKEGRRPGLQLQRDGQPVELKEWAAELLEKIAPLAALLDQSHGGDAHSKALDAQLAKVKDSSLTPSAQVLAAMAAHKESFAQFSLRQSQAHAEFFRSEPLAAEEQAKFEELARSSLAQQAELEQNEVGDFDVFVGSYQASILAISN.

Belongs to the glutamate--cysteine ligase type 1 family. Type 1 subfamily.

It carries out the reaction L-cysteine + L-glutamate + ATP = gamma-L-glutamyl-L-cysteine + ADP + phosphate + H(+). It functions in the pathway sulfur metabolism; glutathione biosynthesis; glutathione from L-cysteine and L-glutamate: step 1/2. In Pseudomonas fluorescens (strain Pf0-1), this protein is Glutamate--cysteine ligase.